We begin with the raw amino-acid sequence, 267 residues long: Undecaprenyl-diphosphatase (267 aa).

Transmembrane regions (helical) follow at residues 1–21 (MTYF…FLPI), 39–59 (QGLA…VIYF), 83–103 (SNLA…GLLF), 111–131 (LRSA…LWWV), 149–169 (ALFL…RSGI), 189–209 (FLMS…KLAM), 218–238 (LLST…HFFL), and 246–266 (MMPF…WLAL).

This sequence belongs to the UppP family.

The protein localises to the cell inner membrane. It carries out the reaction di-trans,octa-cis-undecaprenyl diphosphate + H2O = di-trans,octa-cis-undecaprenyl phosphate + phosphate + H(+). Functionally, catalyzes the dephosphorylation of undecaprenyl diphosphate (UPP). Confers resistance to bacitracin. The protein is Undecaprenyl-diphosphatase of Aliivibrio fischeri (strain ATCC 700601 / ES114) (Vibrio fischeri).